A 322-amino-acid polypeptide reads, in one-letter code: Pantothenate kinase (322 aa).

Gly-104–Ser-111 is a binding site for ATP.

This sequence belongs to the prokaryotic pantothenate kinase family.

The protein localises to the cytoplasm. It carries out the reaction (R)-pantothenate + ATP = (R)-4'-phosphopantothenate + ADP + H(+). Its pathway is cofactor biosynthesis; coenzyme A biosynthesis; CoA from (R)-pantothenate: step 1/5. The protein is Pantothenate kinase of Leifsonia xyli subsp. xyli (strain CTCB07).